A 217-amino-acid chain; its full sequence is Probable GTP-binding protein EngB (217 aa).

Positions aspartate 44–glutamate 217 constitute an EngB-type G domain. GTP contacts are provided by residues glycine 52–serine 59, glycine 79–glutamate 83, aspartate 97–glycine 100, threonine 164–aspartate 167, and threonine 198–serine 200. The Mg(2+) site is built by serine 59 and threonine 81.

This sequence belongs to the TRAFAC class TrmE-Era-EngA-EngB-Septin-like GTPase superfamily. EngB GTPase family. It depends on Mg(2+) as a cofactor.

Its function is as follows. Necessary for normal cell division and for the maintenance of normal septation. The protein is Probable GTP-binding protein EngB of Ruegeria pomeroyi (strain ATCC 700808 / DSM 15171 / DSS-3) (Silicibacter pomeroyi).